Reading from the N-terminus, the 95-residue chain is Bombyxin F-1 (95 aa).

A signal peptide spans 1 to 19; that stretch reads MKLVVIVLLVISVSILVSA. Disulfide bonds link Cys-29–Cys-82, Cys-41–Cys-95, and Cys-81–Cys-86. Residues 53–71 constitute a propeptide, c peptide like; the sequence is NSDMVYEDSGMPELLPADT.

It belongs to the insulin family. Heterodimer of a B chain and an A chain linked by two disulfide bonds.

The protein resides in the secreted. This Bombyx mori (Silk moth) protein is Bombyxin F-1 (BBXF1).